The sequence spans 214 residues: Ras-like protein rasZ (214 aa).

16–23 (GDGGVGKT) is a binding site for GTP. An Effector region motif is present at residues 38–46 (YDPTIEDSY). GTP is bound by residues 63 to 67 (DTAGQ) and 122 to 125 (NKSD). C211 is subject to Cysteine methyl ester. C211 carries S-geranylgeranyl cysteine lipidation. Positions 212-214 (KMM) are cleaved as a propeptide — removed in mature form.

It belongs to the small GTPase superfamily. Ras family.

It localises to the cell membrane. It carries out the reaction GTP + H2O = GDP + phosphate + H(+). In terms of biological role, ras proteins bind GDP/GTP and possess intrinsic GTPase activity. This chain is Ras-like protein rasZ (rasZ), found in Dictyostelium discoideum (Social amoeba).